The sequence spans 643 residues: Threonine--tRNA ligase (643 aa).

A TGS domain is found at 1–61 (MPIITLPDGS…SEDSSLEIIT (61 aa)). The tract at residues 243–534 (DHRRIGKALD…ITEEYAGFFP (292 aa)) is catalytic. Residues Cys334, His385, and His511 each contribute to the Zn(2+) site.

The protein belongs to the class-II aminoacyl-tRNA synthetase family. Homodimer. Zn(2+) is required as a cofactor.

The protein resides in the cytoplasm. The enzyme catalyses tRNA(Thr) + L-threonine + ATP = L-threonyl-tRNA(Thr) + AMP + diphosphate + H(+). Functionally, catalyzes the attachment of threonine to tRNA(Thr) in a two-step reaction: L-threonine is first activated by ATP to form Thr-AMP and then transferred to the acceptor end of tRNA(Thr). Also edits incorrectly charged L-seryl-tRNA(Thr). The chain is Threonine--tRNA ligase from Actinobacillus pleuropneumoniae serotype 5b (strain L20).